Reading from the N-terminus, the 37-residue chain is Large ribosomal subunit protein bL36c (37 aa).

This sequence belongs to the bacterial ribosomal protein bL36 family.

It localises to the plastid. The polypeptide is Large ribosomal subunit protein bL36c (rpl36) (Epifagus virginiana (Beechdrops)).